Here is a 389-residue protein sequence, read N- to C-terminus: Phospho-N-acetylmuramoyl-pentapeptide-transferase (389 aa).

A run of 10 helical transmembrane segments spans residues 25–45, 74–94, 97–117, 134–154, 190–210, 222–242, 259–279, 286–306, 311–331, and 366–386; these read RAVM…PFVI, MGGV…ADWG, FIWI…VDDY, FFWQ…SVSE, ISYP…IVGS, GLVI…AYVM, AGEL…FLWF, VFMG…IAVI, IVLF…MLQV, and QVVV…LSTL.

It belongs to the glycosyltransferase 4 family. MraY subfamily. The cofactor is Mg(2+).

It localises to the cell inner membrane. It catalyses the reaction UDP-N-acetyl-alpha-D-muramoyl-L-alanyl-gamma-D-glutamyl-meso-2,6-diaminopimeloyl-D-alanyl-D-alanine + di-trans,octa-cis-undecaprenyl phosphate = di-trans,octa-cis-undecaprenyl diphospho-N-acetyl-alpha-D-muramoyl-L-alanyl-D-glutamyl-meso-2,6-diaminopimeloyl-D-alanyl-D-alanine + UMP. It functions in the pathway cell wall biogenesis; peptidoglycan biosynthesis. Catalyzes the initial step of the lipid cycle reactions in the biosynthesis of the cell wall peptidoglycan: transfers peptidoglycan precursor phospho-MurNAc-pentapeptide from UDP-MurNAc-pentapeptide onto the lipid carrier undecaprenyl phosphate, yielding undecaprenyl-pyrophosphoryl-MurNAc-pentapeptide, known as lipid I. This chain is Phospho-N-acetylmuramoyl-pentapeptide-transferase, found in Ralstonia pickettii (strain 12J).